The primary structure comprises 423 residues: Alpha-1-antichymotrypsin (423 aa).

Residues 1–23 (MERMLPFLALGLLVAGFCPAVLC) form the signal peptide. N-linked (GlcNAc...) asparagine glycosylation is found at N93, N106, N127, N186, and N271. Positions 369–394 (GTEASAATAVKITLLSALVDPMTIVR) are RCL.

It belongs to the serpin family. In terms of assembly, interacts with DNAJC1. In terms of tissue distribution, plasma.

The protein resides in the secreted. Although its physiological function is unclear, it can inhibit neutrophil cathepsin G and mast cell chymase, both of which can convert angiotensin-1 to the active angiotensin-2. In Pongo abelii (Sumatran orangutan), this protein is Alpha-1-antichymotrypsin (SERPINA3).